A 407-amino-acid polypeptide reads, in one-letter code: PWWP domain-containing protein 3 (407 aa).

A disordered region spans residues 1-46; sequence MMVARTRSQKRKLEEINNQKKIKTKKKATGQQTSNTKNLRDVKKKG. The 67-residue stretch at 63–129 folds into the PWWP domain; that stretch reads NGEYVLAKMS…SSNVLPLTVD (67 aa). Phosphoserine occurs at positions 160 and 162. The disordered stretch occupies residues 163-248; the sequence is DVEEDEFEPE…PIPSPKKTAK (86 aa). Over residues 172–208 the composition is skewed to basic and acidic residues; the sequence is ENTRKKLQKPIEKPKKEKIEATPKIDGGKRLKNEKSS. A phosphoserine mark is found at Ser236, Ser238, and Ser242.

As to quaternary structure, component of the mst2 complex composed of at least eaf6, mst2, nto1, pdp3, ptf1, ptf2 and tfg3.

It localises to the nucleus. In terms of biological role, component of the mst2 complex which is a highly specific H3 lysine 14 (H3K14) acetyltransferase that functions together with gcn5 to regulate global levels of H3K14 acetylation (H3K14ac), critical for DNA damage checkpoint activation. In Schizosaccharomyces pombe (strain 972 / ATCC 24843) (Fission yeast), this protein is PWWP domain-containing protein 3 (pdp3).